A 728-amino-acid chain; its full sequence is Protein Hook homolog 1 (728 aa).

Methionine 1 carries the post-translational modification N-acetylmethionine. The tract at residues 1 to 555 (MEDPQPLPQS…LKQKLEAHME (555 aa)) is sufficient for interaction with microtubules. The Calponin-homology (CH) domain maps to 12–128 (LPLCDSLIIW…RLLQLILGCA (117 aa)). Coiled-coil stretches lie at residues 168-443 (PASD…LNQA) and 477-658 (LRLQ…AKLR). Phosphoserine is present on serine 235. The interval 481-510 (QEGTENERIEQLQEQLEQKHRKMNELETEQ) is disordered. A sufficient for interaction with AKTIP and VPS18 region spans residues 657-728 (LRDYEEKLIV…SVKVPAAASD (72 aa)). Serine 719 and serine 727 each carry phosphoserine.

It belongs to the hook family. In terms of assembly, self-associates. Component of the FTS/Hook/FHIP complex (FHF complex), composed of AKTIP/FTS, FHIP1B, and one or more members of the Hook family of proteins HOOK1, HOOK2, and HOOK3. Interacts directly with AKTIP/FTS, HOOK2 and HOOK3. Associates with several subunits of the homotypic vesicular sorting complex (the HOPS complex) including VPS16, VPS18, VPS39 and VPS41; these interactions may be indirect. Interacts with CCDC181. Interacts (via coiled-coil region) with RIMBP3 (via C-terminus). Interacts with LRGUK (via guanylate kinase-like domain). Interacts with microtubules. May interacts with CLN3. Interacts with AP4M1; the interaction is direct, mediates the interaction between FTS-Hook-FHIP (FHF) complex and AP-4 and the perinuclear distribution of AP-4. As to expression, mainly expressed in testis.

The protein resides in the cytoplasm. Its subcellular location is the cytoskeleton. Its function is as follows. Component of the FTS/Hook/FHIP complex (FHF complex). The FHF complex may function to promote vesicle trafficking and/or fusion via the homotypic vesicular protein sorting complex (the HOPS complex). FHF complex promotes the distribution of AP-4 complex to the perinuclear area of the cell. Required for spermatid differentiation. Probably involved in the positioning of the microtubules of the manchette and the flagellum in relation to the membrane skeleton. This chain is Protein Hook homolog 1 (Hook1), found in Mus musculus (Mouse).